Here is a 1089-residue protein sequence, read N- to C-terminus: Platelet-derived growth factor receptor alpha (1089 aa).

The N-terminal stretch at 1–23 (MGTSHPAFLVLGCLLTGLSLILC) is a signal peptide. Ig-like C2-type domains lie at 24–113 (QLSL…NELE), 117–201 (IYIY…FQTI), 202–306 (PFNV…KKVT), 319–410 (PTFS…FELL), and 414–517 (PSSI…LKLV). Topologically, residues 24-528 (QLSLPSILPN…PTLRSELTVA (505 aa)) are extracellular. N-linked (GlcNAc...) asparagine glycosylation is found at Asn-42, Asn-76, Asn-103, and Asn-179. Cys-49 and Cys-100 form a disulfide bridge. 2 cysteine pairs are disulfide-bonded: Cys-150-Cys-189 and Cys-235-Cys-290. Residues Asn-353, Asn-359, Asn-458, and Asn-468 are each glycosylated (N-linked (GlcNAc...) asparagine). The cysteines at positions 435 and 501 are disulfide-linked. The helical transmembrane segment at 529–549 (AAVLVLLVIVIISLIVLVVIW) threads the bilayer. Over 550–1089 (KQKPRYEIRW…SSDLVEDSFL (540 aa)) the chain is Cytoplasmic. A phosphotyrosine; by autocatalysis mark is found at Tyr-572 and Tyr-574. A Protein kinase domain is found at 593–954 (LVLGRVLGSG…HLSEIVENLL (362 aa)). Residues 599-607 (LGSGAFGKV) and Lys-627 contribute to the ATP site. Tyr-720, Tyr-731, Tyr-742, Tyr-754, Tyr-762, and Tyr-768 each carry phosphotyrosine; by autocatalysis. The Proton acceptor role is filled by Asp-818. Residues Tyr-849, Tyr-988, and Tyr-1018 each carry the phosphotyrosine; by autocatalysis modification. Residues 1018–1089 (YIIPLPDIDP…SSDLVEDSFL (72 aa)) form a disordered region. Residues 1041–1059 (SSQTSEESAIETGSSSSTF) are compositionally biased toward polar residues. Positions 1065–1089 (ETIEDIDMMDDIGIDSSDLVEDSFL) are enriched in acidic residues.

Belongs to the protein kinase superfamily. Tyr protein kinase family. CSF-1/PDGF receptor subfamily. As to quaternary structure, interacts with homodimeric PDGFA, PDGFB and PDGFC, and with heterodimers formed by PDGFA and PDGFB. Monomer in the absence of bound ligand. Interaction with dimeric PDGFA, PDGFB and/or PDGFC leads to receptor dimerization, where both PDGFRA homodimers and heterodimers with PDGFRB are observed. Interacts (tyrosine phosphorylated) with SHB (via SH2 domain). Interacts (tyrosine phosphorylated) with SHF (via SH2 domain). Interacts (tyrosine phosphorylated) with SRC (via SH2 domain). Interacts (tyrosine phosphorylated) with PIK3R1. Interacts (tyrosine phosphorylated) with PLCG1 (via SH2 domain). Interacts (tyrosine phosphorylated) with CRK, GRB2 and GRB7. Interacts with CD248; this interaction promotes PDGF receptor signaling pathway. (Microbial infection) Interacts with human cytomegalovirus/HHV-5 envelope glycoprotein B/gB. Also interacts with the trimeric complex gH-gL-gO. Trimer-PDGFRA interaction has an inhibitory effect on PDGFRA signaling. N-glycosylated. Post-translationally, ubiquitinated, leading to its internalization and degradation. In terms of processing, autophosphorylated on tyrosine residues upon ligand binding. Autophosphorylation occurs in trans, i.e. one subunit of the dimeric receptor phosphorylates tyrosine residues on the other subunit. Phosphorylation at Tyr-731 and Tyr-742 is important for interaction with PIK3R1. Phosphorylation at Tyr-720 and Tyr-754 is important for interaction with PTPN11. Phosphorylation at Tyr-762 is important for interaction with CRK. Phosphorylation at Tyr-572 and Tyr-574 is important for interaction with SRC and SRC family members. Phosphorylation at Tyr-988 and Tyr-1018 is important for interaction with PLCG1. In terms of tissue distribution, detected in platelets (at protein level). Widely expressed. Detected in brain, fibroblasts, smooth muscle, heart, and embryo. Expressed in primary and metastatic colon tumors and in normal colon tissue.

It is found in the cell membrane. The protein localises to the cell projection. The protein resides in the cilium. It localises to the golgi apparatus. The catalysed reaction is L-tyrosyl-[protein] + ATP = O-phospho-L-tyrosyl-[protein] + ADP + H(+). With respect to regulation, present in an inactive conformation in the absence of bound ligand. Binding of PDGFA and/or PDGFB leads to dimerization and activation by autophosphorylation on tyrosine residues. Inhibited by imatinib, nilotinib and sorafenib. Tyrosine-protein kinase that acts as a cell-surface receptor for PDGFA, PDGFB and PDGFC and plays an essential role in the regulation of embryonic development, cell proliferation, survival and chemotaxis. Depending on the context, promotes or inhibits cell proliferation and cell migration. Plays an important role in the differentiation of bone marrow-derived mesenchymal stem cells. Required for normal skeleton development and cephalic closure during embryonic development. Required for normal development of the mucosa lining the gastrointestinal tract, and for recruitment of mesenchymal cells and normal development of intestinal villi. Plays a role in cell migration and chemotaxis in wound healing. Plays a role in platelet activation, secretion of agonists from platelet granules, and in thrombin-induced platelet aggregation. Binding of its cognate ligands - homodimeric PDGFA, homodimeric PDGFB, heterodimers formed by PDGFA and PDGFB or homodimeric PDGFC -leads to the activation of several signaling cascades; the response depends on the nature of the bound ligand and is modulated by the formation of heterodimers between PDGFRA and PDGFRB. Phosphorylates PIK3R1, PLCG1, and PTPN11. Activation of PLCG1 leads to the production of the cellular signaling molecules diacylglycerol and inositol 1,4,5-trisphosphate, mobilization of cytosolic Ca(2+) and the activation of protein kinase C. Phosphorylates PIK3R1, the regulatory subunit of phosphatidylinositol 3-kinase, and thereby mediates activation of the AKT1 signaling pathway. Mediates activation of HRAS and of the MAP kinases MAPK1/ERK2 and/or MAPK3/ERK1. Promotes activation of STAT family members STAT1, STAT3 and STAT5A and/or STAT5B. Receptor signaling is down-regulated by protein phosphatases that dephosphorylate the receptor and its down-stream effectors, and by rapid internalization of the activated receptor. The protein is Platelet-derived growth factor receptor alpha (PDGFRA) of Homo sapiens (Human).